Here is a 124-residue protein sequence, read N- to C-terminus: Large ribosomal subunit protein mL51 (124 aa).

Residues 1–31 constitute a mitochondrion transit peptide; that stretch reads MSVFGGLWRSAVNLCQSSRLFSTGSCARIRM.

The protein belongs to the mitochondrion-specific ribosomal protein mL51 family. Component of the mitochondrial ribosome large subunit (39S) which comprises a 16S rRNA and about 50 distinct proteins.

Its subcellular location is the mitochondrion. This is Large ribosomal subunit protein mL51 (mrpl51) from Danio rerio (Zebrafish).